The primary structure comprises 610 residues: UvrABC system protein C (610 aa).

One can recognise a GIY-YIG domain in the interval 16–94 (SQPGVYRMYD…IKLYQPRYNV (79 aa)). In terms of domain architecture, UVR spans 204–239 (DQVLTQLISRMETASQNLEFEEAARIRDQIQAVRRV).

This sequence belongs to the UvrC family. Interacts with UvrB in an incision complex.

It localises to the cytoplasm. The UvrABC repair system catalyzes the recognition and processing of DNA lesions. UvrC both incises the 5' and 3' sides of the lesion. The N-terminal half is responsible for the 3' incision and the C-terminal half is responsible for the 5' incision. The sequence is that of UvrABC system protein C from Escherichia coli O139:H28 (strain E24377A / ETEC).